The primary structure comprises 223 residues: Small ribosomal subunit protein uS3 (223 aa).

The 77-residue stretch at 39–115 folds into the KH type-2 domain; that stretch reads IRKYIEKNLA…RVFINIVEIK (77 aa).

This sequence belongs to the universal ribosomal protein uS3 family. In terms of assembly, part of the 30S ribosomal subunit. Forms a tight complex with proteins S10 and S14.

Functionally, binds the lower part of the 30S subunit head. Binds mRNA in the 70S ribosome, positioning it for translation. The chain is Small ribosomal subunit protein uS3 from Leuconostoc mesenteroides subsp. mesenteroides (strain ATCC 8293 / DSM 20343 / BCRC 11652 / CCM 1803 / JCM 6124 / NCDO 523 / NBRC 100496 / NCIMB 8023 / NCTC 12954 / NRRL B-1118 / 37Y).